A 299-amino-acid chain; its full sequence is Methionyl-tRNA formyltransferase (299 aa).

109-112 (SLLP) is a (6S)-5,6,7,8-tetrahydrofolate binding site.

This sequence belongs to the Fmt family.

It catalyses the reaction L-methionyl-tRNA(fMet) + (6R)-10-formyltetrahydrofolate = N-formyl-L-methionyl-tRNA(fMet) + (6S)-5,6,7,8-tetrahydrofolate + H(+). In terms of biological role, attaches a formyl group to the free amino group of methionyl-tRNA(fMet). The formyl group appears to play a dual role in the initiator identity of N-formylmethionyl-tRNA by promoting its recognition by IF2 and preventing the misappropriation of this tRNA by the elongation apparatus. This is Methionyl-tRNA formyltransferase from Wolbachia pipientis subsp. Culex pipiens (strain wPip).